Consider the following 501-residue polypeptide: Ribose import ATP-binding protein RbsA (501 aa).

ABC transporter domains lie at 6-242 and 253-495; these read LQLS…VGRK and KHGE…VGKK. Position 38–45 (38–45) interacts with ATP; sequence GENGAGKS.

It belongs to the ABC transporter superfamily. Ribose importer (TC 3.A.1.2.1) family. As to quaternary structure, the complex is composed of an ATP-binding protein (RbsA), two transmembrane proteins (RbsC) and a solute-binding protein (RbsB).

The protein localises to the cell inner membrane. It catalyses the reaction D-ribose(out) + ATP + H2O = D-ribose(in) + ADP + phosphate + H(+). Part of the ABC transporter complex RbsABC involved in ribose import. Responsible for energy coupling to the transport system. In Vibrio parahaemolyticus serotype O3:K6 (strain RIMD 2210633), this protein is Ribose import ATP-binding protein RbsA.